A 165-amino-acid chain; its full sequence is Short form salivary protein D7R1 (165 aa).

Positions 1 to 21 (MFNKLHLVSLLACGLFVIAQA) are cleaved as a signal peptide. Intrachain disulfides connect Cys27-Cys59, Cys40-Cys164, and Cys98-Cys117. Residues Glu28, His56, Tyr115, Asp132, and Glu135 each coordinate serotonin. Tyr115, Asp132, and Glu135 together coordinate histamine.

It belongs to the PBP/GOBP family. As to expression, female salivary gland. Not detected in female carcass without salivary glands. Not detected in male tissues.

The protein localises to the secreted. In terms of biological role, modulates blood feeding of female mosquitoes on vertebrate species by binding and sequestering different mediators involved in the host response. Binds serotonin and histamine. Increases blood clotting time. In Anopheles gambiae (African malaria mosquito), this protein is Short form salivary protein D7R1.